A 193-amino-acid chain; its full sequence is Putative deoxynucleotide monophosphate kinase (193 aa).

K10 is a binding site for dGMP. Residues G13 and T16 each coordinate ATP. DGMP contacts are provided by L36, K37, K58, D122, R124, E128, and S155.

It belongs to the dNMP kinase family.

It catalyses the reaction a 2'-deoxyribonucleoside 5'-phosphate + ATP = a 2'-deoxyribonucleoside 5'-diphosphate + ADP. The polypeptide is Putative deoxynucleotide monophosphate kinase (Acanthamoeba polyphaga mimivirus (APMV)).